Here is a 234-residue protein sequence, read N- to C-terminus: 2,3-bisphosphoglycerate-dependent phosphoglycerate mutase 1 (234 aa).

Substrate is bound by residues 14-21, 27-28, Arg66, and 93-96; these read RHGQSIWN, TG, and ERHY. Catalysis depends on His15, which acts as the Tele-phosphohistidine intermediate. The active-site Proton donor/acceptor is Glu93.

Belongs to the phosphoglycerate mutase family. BPG-dependent PGAM subfamily. Homodimer.

The enzyme catalyses (2R)-2-phosphoglycerate = (2R)-3-phosphoglycerate. It participates in carbohydrate degradation; glycolysis; pyruvate from D-glyceraldehyde 3-phosphate: step 3/5. Catalyzes the interconversion of 2-phosphoglycerate and 3-phosphoglycerate. The polypeptide is 2,3-bisphosphoglycerate-dependent phosphoglycerate mutase 1 (Nitrosomonas europaea (strain ATCC 19718 / CIP 103999 / KCTC 2705 / NBRC 14298)).